A 2167-amino-acid chain; its full sequence is Glutamate synthase 1 [NADH], chloroplastic (2167 aa).

Residues 1–31 form a disordered region; the sequence is MSAAQGMAYKLRTDAAPTGAGRRARRSHSSV. Residues 1-36 constitute a chloroplast transit peptide; the sequence is MSAAQGMAYKLRTDAAPTGAGRRARRSHSSVAAPYR. C100 (nucleophile) is an active-site residue. The 405-residue stretch at 100–504 folds into the Glutamine amidotransferase type-2 domain; that stretch reads CGVGFVAELS…PGMMLLVDFE (405 aa). The tract at residues 1022–1042 is disordered; that stretch reads KSNTGEGGEQPSRMEPLANGS. 1192-1249 contacts FMN; that stretch reads LAETHQTLVANGLRGRAILQTDGQLKTGKDVAVACLLGAEEFGFSTAPLITLGCIMMR. The [3Fe-4S] cluster site is built by C1245, C1251, and C1256. 1956–1970 is a binding site for NAD(+); sequence GGGDTGTDCIGTSIR.

Belongs to the glutamate synthase family. As to quaternary structure, monomer. The cofactor is [3Fe-4S] cluster. FAD is required as a cofactor. FMN serves as cofactor. As to expression, highly expressed in roots.

The protein resides in the plastid. Its subcellular location is the chloroplast. The catalysed reaction is 2 L-glutamate + NAD(+) = L-glutamine + 2-oxoglutarate + NADH + H(+). The protein operates within amino-acid biosynthesis; L-glutamate biosynthesis via GLT pathway; L-glutamate from 2-oxoglutarate and L-glutamine (NAD(+) route): step 1/1. Its pathway is energy metabolism; nitrogen metabolism. Involved in glutamate biosynthesis and plays a major role in the primary ammonium ions assimilation in seedling roots. May be involved in the reutilization of glutamine in developing organs. Plays a role in the development of tillers. This chain is Glutamate synthase 1 [NADH], chloroplastic, found in Oryza sativa subsp. japonica (Rice).